Consider the following 37-residue polypeptide: Large ribosomal subunit protein bL36 (37 aa).

It belongs to the bacterial ribosomal protein bL36 family.

This is Large ribosomal subunit protein bL36 from Treponema pallidum (strain Nichols).